Consider the following 297-residue polypeptide: tRNA dimethylallyltransferase (297 aa).

Glycine 10–serine 17 is a binding site for ATP. A substrate-binding site is contributed by threonine 12–serine 17. An interaction with substrate tRNA region spans residues aspartate 36 to glutamine 39.

Belongs to the IPP transferase family. In terms of assembly, monomer. Mg(2+) is required as a cofactor.

The catalysed reaction is adenosine(37) in tRNA + dimethylallyl diphosphate = N(6)-dimethylallyladenosine(37) in tRNA + diphosphate. Functionally, catalyzes the transfer of a dimethylallyl group onto the adenine at position 37 in tRNAs that read codons beginning with uridine, leading to the formation of N6-(dimethylallyl)adenosine (i(6)A). The chain is tRNA dimethylallyltransferase from Wolbachia pipientis subsp. Culex pipiens (strain wPip).